The following is a 207-amino-acid chain: Varv peptide A/Kalata-B1 (207 aa).

Positions 1-20 are cleaved as a signal peptide; it reads MKMFIVLVLSAAFALPAAFA. Positions 21-66 are excised as a propeptide; the sequence is TEQDVITLQAYEELLKNGAANGMTKTVISSPVLEEALVSYSKNKLG. The segment at residues 67–95 is a cross-link (cyclopeptide (Gly-Asn)); it reads GLPVCGETCVGGTCNTPGCSCSWPVCTRN. 3 cysteine pairs are disulfide-bonded: Cys-71–Cys-85, Cys-75–Cys-87, and Cys-80–Cys-92. Positions 96–120 are excised as a propeptide; it reads SLESTKSANPLLEEALTAFAKKGLG. The cyclopeptide (Gly-Asn) cross-link spans 121–149; that stretch reads GLPVCGETCVGGTCNTPGCTCSWPVCTRN. Cystine bridges form between Cys-125-Cys-139, Cys-129-Cys-141, and Cys-134-Cys-146. Positions 150-174 are excised as a propeptide; it reads ALETQKPNHLLEEALVAFAKKGNLG. Positions 175 to 203 form a cross-link, cyclopeptide (Gly-Asn); sequence GLPVCGETCVGGTCNTPGCSCSWPVCTRN. 3 disulfide bridges follow: Cys-179/Cys-193, Cys-183/Cys-195, and Cys-188/Cys-200. Residues 204 to 207 constitute a propeptide that is removed on maturation; it reads ALAM.

This sequence belongs to the cyclotide family. Moebius subfamily. Varv peptide A and kalata-B1 are cyclic peptides.

Functionally, probably participates in a plant defense mechanism. Has hemolytic activity. The protein is Varv peptide A/Kalata-B1 of Viola odorata (Sweet violet).